The following is a 547-amino-acid chain: Undecaprenyl phosphate-alpha-4-amino-4-deoxy-L-arabinose arabinosyl transferase (547 aa).

10 consecutive transmembrane segments (helical) span residues 83-103 (FASAAATGLSALLIFWFALQL), 111-131 (FLASLIYLSLLIVYGIGTYSV), 174-194 (FLTKGFIALAVPVVVIVPYVI), 205-225 (FGPLAILSAVLLAAPWAIAVH), 253-273 (APFWYYLPMGLLGTLPWLGLL), 286-306 (ISPETLYLLAWVILPLLFFSI), 311-331 (LLTYILPCFAPLAMLMAANAV), 346-366 (AWLNGLFGLICLVVLAVLAFS), 378-398 (GALAVAMVIFAGWSLLGFIQL), and 408-428 (SALCPMVLAIGLPWALPQSLI).

It belongs to the glycosyltransferase 83 family.

The protein resides in the cell inner membrane. The enzyme catalyses 4-amino-4-deoxy-alpha-L-arabinopyranosyl di-trans,octa-cis-undecaprenyl phosphate + lipid IVA = lipid IIA + di-trans,octa-cis-undecaprenyl phosphate.. It participates in lipopolysaccharide metabolism; 4-amino-4-deoxy-beta-L-arabinose-lipid A biosynthesis. Catalyzes the transfer of the L-Ara4N moiety of the glycolipid undecaprenyl phosphate-alpha-L-Ara4N to lipid A. The modified arabinose is attached to lipid A and is required for resistance to polymyxin and cationic antimicrobial peptides. The polypeptide is Undecaprenyl phosphate-alpha-4-amino-4-deoxy-L-arabinose arabinosyl transferase (Aeromonas hydrophila subsp. hydrophila (strain ATCC 7966 / DSM 30187 / BCRC 13018 / CCUG 14551 / JCM 1027 / KCTC 2358 / NCIMB 9240 / NCTC 8049)).